Here is a 339-residue protein sequence, read N- to C-terminus: MVREEVAGSTQTLQWKCVESRVDSKRLYYGRFILSPLRKGQADTVGIALRRALLGEIEGTCITRAKFGSVPHEYSTIAGIEESVQEILLNLKEIVLRSNLYGVRDASICVKGPRYITAQDIILPPSVEIVDTAQPIANLTEPIDFCIDLQIKRDRGYQTELRKNYQDGSYPIDAVSMPVRNVNYSIFSCGNGNEKHEILFLEIWTNGSLTPKEALYEASRNLIDLFLPFLHAEEEGASFEENKNRFTPPLFTFQKRLTNLKKNKKGIPLNCIFIDQLELTSRTYNCXKRXXXXTLLDLLSKTEEDLLRIDSFRMEDRKHIWDTLEKHLPIDLLKNKLSF.

The tract at residues 1–233 is alpha N-terminal domain (alpha-NTD); it reads MVREEVAGST…DLFLPFLHAE (233 aa). The alpha C-terminal domain (alpha-CTD) stretch occupies residues 264 to 339; the sequence is KKGIPLNCIF…IDLLKNKLSF (76 aa).

The protein belongs to the RNA polymerase alpha chain family. In terms of assembly, in plastids the minimal PEP RNA polymerase catalytic core is composed of four subunits: alpha, beta, beta', and beta''. When a (nuclear-encoded) sigma factor is associated with the core the holoenzyme is formed, which can initiate transcription.

It localises to the plastid. It is found in the chloroplast. It catalyses the reaction RNA(n) + a ribonucleoside 5'-triphosphate = RNA(n+1) + diphosphate. In terms of biological role, DNA-dependent RNA polymerase catalyzes the transcription of DNA into RNA using the four ribonucleoside triphosphates as substrates. This chain is DNA-directed RNA polymerase subunit alpha, found in Crithopsis delileana.